A 342-amino-acid polypeptide reads, in one-letter code: N-acetyl-gamma-glutamyl-phosphate reductase (342 aa).

Cys149 is an active-site residue.

Belongs to the NAGSA dehydrogenase family. Type 1 subfamily.

Its subcellular location is the cytoplasm. The enzyme catalyses N-acetyl-L-glutamate 5-semialdehyde + phosphate + NADP(+) = N-acetyl-L-glutamyl 5-phosphate + NADPH + H(+). It participates in amino-acid biosynthesis; L-arginine biosynthesis; N(2)-acetyl-L-ornithine from L-glutamate: step 3/4. In terms of biological role, catalyzes the NADPH-dependent reduction of N-acetyl-5-glutamyl phosphate to yield N-acetyl-L-glutamate 5-semialdehyde. This Nitrosomonas europaea (strain ATCC 19718 / CIP 103999 / KCTC 2705 / NBRC 14298) protein is N-acetyl-gamma-glutamyl-phosphate reductase.